A 1284-amino-acid chain; its full sequence is Zinc finger protein 423 (1284 aa).

2 disordered regions span residues 1–64 (MHKK…MEDE) and 87–117 (AHRCPGDGDDDPQLSWVASSPSSKDVASPTQ). Residues 34–46 (CDQKTSRALEDRN) show a composition bias toward basic and acidic residues. 2 positions are modified to phosphoserine: serine 47 and serine 50. The span at 54–64 (RNEDDEDMEDE) shows a compositional bias: acidic residues. Residues 67–93 (YTCDHCQQDFESLADLTDHRAHRCPGD) form a C2H2-type 1; degenerate zinc finger. The span at 102–117 (WVASSPSSKDVASPTQ) shows a compositional bias: polar residues. C2H2-type zinc fingers lie at residues 138–160 (YPCQFCDKSFIRLSYLKRHEQIH), 166–188 (FKCTYCSRLFKHKRSRDRHIKLH), 194–216 (YHCHECEAAFSRSDHLKIHLKTH), 222–244 (FKCTVCKRGFSSTSSLQSHMQAH), 263–286 (FMCDYCEDTFSQTEELEKHVLTRH), 295–318 (LQCIHCPEVFVDENTLLAHIHQAH), and 323–345 (HKCPMCPEQFSSVEGVYCHLDSH). Residues 346-398 (RQPDSSNHSVSPDPVLGSVASMSSATPDSSASVERGSTPDSTLKPLRGQKKMR) form a disordered region. Residues 363–377 (SVASMSSATPDSSAS) are compositionally biased toward low complexity. The C2H2-type 9; degenerate zinc-finger motif lies at 409–433 (YSCPYCSKRDFNSLAVLEIHLKTIH). 3 C2H2-type zinc fingers span residues 441-464 (HTCQICLDSMPTLYNLNEHVRKLH), 480-503 (FHCNYCPEMFADINSLQEHIRVSH), and 517-540 (FFCNQCSMGFLTESSLTEHIQQAH). The C2H2-type 13; atypical zinc-finger motif lies at 563–588 (YSCPYCTNSPIFGSILKLTKHIKENH). The tract at residues 590–624 (NIPLAHSKKSKAEQSPVSSDVEVSSPKRQRLSASA) is disordered. Position 604 is a phosphoserine (serine 604). Positions 604 to 615 (SPVSSDVEVSSP) are enriched in low complexity. C2H2-type zinc fingers lie at residues 632 to 654 (YPCNQCDLKFSNFESFQTHLKLH), 662 to 684 (QACPQCKEDFDSQESLLQHLTVH), 692 to 715 (YVCESCDKQFSSVDDLQKHLLDMH), 720 to 743 (YHCTLCQEVFDSKVSIQVHLAVKH), 750 to 773 (YRCTACNWDFRKEADLQVHVKHSH), 781 to 803 (HKCIFCGETFSTEVELQCHITTH), and 807 to 830 (YNCKFCSKAFHAIILLEKHLREKH). A C2H2-type 21; degenerate zinc finger spans residues 886–908 (YGCDICGAAYTMEVLLQNHRLRD). 3 consecutive C2H2-type zinc fingers follow at residues 930–952 (HKCNVCSRTFFSENGLREHLQTH), 959–981 (YMCPICGERFPSLLTLTEHKVTH), and 1020–1042 (FRCVVCMQTVTSTLELKIHGTFH). The residue at position 1054 (serine 1054) is a Phosphoserine. Residues 1064 to 1082 (YKCALCLKEFRSKQDLVKL) form a C2H2-type 25; degenerate zinc finger. 5 C2H2-type zinc fingers span residues 1120-1143 (LRCPECSVKFESAEDLESHMQVDH), 1168-1190 (YQCIKCQMTFENEREIQIHVANH), 1198-1220 (HECKLCNQMFDSPAKLLCHLIEH), 1229-1252 (FKCPVCFTVFVQANKLQQHIFAVH), and 1259-1282 (YDCSQCPQKFFFQTELQNHTMSQH). The span at 1136 to 1147 (ESHMQVDHRDLT) shows a compositional bias: basic and acidic residues. The segment at 1136 to 1163 (ESHMQVDHRDLTPETSGPRKGTQTSPVP) is disordered.

It belongs to the krueppel C2H2-type zinc-finger protein family. In terms of assembly, homodimer. Interacts with EBF1. Interacts with SMAD1 and SMAD4. Interacts with PARP1. Interacts with CEP290. In terms of tissue distribution, expressed in brain, lung, skeletal muscle, heart, pancreas and kidney but not liver or placenta. Also expressed in aorta, ovary, pituitary, small intestine, fetal brain, fetal kidney and, within the adult brain, in the substantia nigra, medulla, amygdala, thalamus and cerebellum.

The protein localises to the nucleus. Functionally, transcription factor that can both act as an activator or a repressor depending on the context. Plays a central role in BMP signaling and olfactory neurogenesis. Associates with SMADs in response to BMP2 leading to activate transcription of BMP target genes. Acts as a transcriptional repressor via its interaction with EBF1, a transcription factor involved in terminal olfactory receptor neurons differentiation; this interaction preventing EBF1 to bind DNA and activate olfactory-specific genes. Involved in olfactory neurogenesis by participating in a developmental switch that regulates the transition from differentiation to maturation in olfactory receptor neurons. Controls proliferation and differentiation of neural precursors in cerebellar vermis formation. In Homo sapiens (Human), this protein is Zinc finger protein 423 (ZNF423).